The sequence spans 609 residues: Phosphoprotein 85 (609 aa).

The tract at residues 461-609 (QNEGRASSRA…RSTETNDERL (149 aa)) is disordered. Residues 465-478 (RASSRASSSHSTST) show a composition bias toward low complexity. Positions 484-495 (PQSGRSTPTSIL) are enriched in polar residues. Low complexity-rich tracts occupy residues 503 to 513 (SNSRSSSVSFS) and 552 to 563 (SPQSASSNNSMS). Over residues 600–609 (RSTETNDERL) the composition is skewed to basic and acidic residues.

This sequence belongs to the herpesviridae pp85 family. In terms of processing, phosphorylated.

The protein localises to the virion tegument. It localises to the host cytoplasm. The polypeptide is Phosphoprotein 85 (U14) (Homo sapiens (Human)).